A 603-amino-acid chain; its full sequence is Iron-sulfur clusters transporter ATM1, mitochondrial (603 aa).

Residues 20–41 (VLLAVGLLVGGKVLNVQVPFFF) form a helical membrane-spanning segment. One can recognise an ABC transmembrane type-1 domain in the interval 20 to 310 (VLLAVGLLVG…LGSVYRELRQ (291 aa)). The Mitochondrial intermembrane portion of the chain corresponds to 42 to 64 (REIVDSLNVDIAATGGTVATVAG). A helical membrane pass occupies residues 65-88 (TMIFAYGASRIGAVVSQELRNAVF). Residues 89–137 (SSVAQKAIRRVATRTFGHLLNLDLNFHLSKQTGGLTRAIDRGTKGISFL) lie on the Mitochondrial matrix side of the membrane. The helical transmembrane segment at 138 to 161 (LTSMVFHIVPTALEISMVCGILTY) threads the bilayer. Gln162 is a topological domain (mitochondrial intermembrane). A helical membrane pass occupies residues 163-183 (FGWEFAAVTALTMSAYTAFTI). Residues 184-249 (WTTAWRTKFR…SSIKVATSLA (66 aa)) are Mitochondrial matrix-facing. Residues 189-193 (RTKFR) and 252-255 (NSGQ) contribute to the glutathione site. A helical transmembrane segment spans residues 250–268 (FLNSGQNIIFSSALTIMMW). Residues 269–283 (LGAKGIVAGSLSVGD) lie on the Mitochondrial intermembrane side of the membrane. The helical transmembrane segment at 284-305 (LVLINQLVFQLSVPLNFLGSVY) threads the bilayer. Gly302 is a glutathione binding site. The Mitochondrial matrix segment spans residues 306–603 (RELRQSLLDM…SEREAPVPVK (298 aa)). The ABC transporter domain occupies 345 to 581 (IRFDNVSFGY…NGLYTELWMA (237 aa)). ATP contacts are provided by residues Tyr354 and 378-389 (GPSGCGKSTLLR).

Belongs to the ABC transporter superfamily. ABCB family. Heavy Metal importer (TC 3.A.1.210) subfamily. Homodimer.

It is found in the mitochondrion inner membrane. Its function is as follows. Performs an essential function in the generation of cytoplasmic iron-sulfur proteins by mediating the ATP-dependent export of Fe/S cluster precursors synthesized by NFS1 and other mitochondrial proteins. Hydrolyzes ATP. Binds glutathione and may function by transporting a glutathione-conjugated iron-sulfur compound. The polypeptide is Iron-sulfur clusters transporter ATM1, mitochondrial (Chaetomium globosum (strain ATCC 6205 / CBS 148.51 / DSM 1962 / NBRC 6347 / NRRL 1970) (Soil fungus)).